A 335-amino-acid chain; its full sequence is Holliday junction branch migration complex subunit RuvB (335 aa).

Residues 4–184 (ADRIISTSAK…FGIVQRLEFY (181 aa)) form a large ATPase domain (RuvB-L) region. ATP contacts are provided by residues Ile-23, Arg-24, Gly-65, Lys-68, Thr-69, Thr-70, 131–133 (EDY), Arg-174, Tyr-184, and Arg-221. Position 69 (Thr-69) interacts with Mg(2+). Residues 185 to 255 (AVEDLTSIVA…SAKAALLMLD (71 aa)) are small ATPAse domain (RuvB-S). The head domain (RuvB-H) stretch occupies residues 258–335 (DAGFDYLDRK…RYFGLEKLTE (78 aa)). Arg-294, Arg-313, and Arg-318 together coordinate DNA.

Belongs to the RuvB family. Homohexamer. Forms an RuvA(8)-RuvB(12)-Holliday junction (HJ) complex. HJ DNA is sandwiched between 2 RuvA tetramers; dsDNA enters through RuvA and exits via RuvB. An RuvB hexamer assembles on each DNA strand where it exits the tetramer. Each RuvB hexamer is contacted by two RuvA subunits (via domain III) on 2 adjacent RuvB subunits; this complex drives branch migration. In the full resolvosome a probable DNA-RuvA(4)-RuvB(12)-RuvC(2) complex forms which resolves the HJ.

Its subcellular location is the cytoplasm. It catalyses the reaction ATP + H2O = ADP + phosphate + H(+). Functionally, the RuvA-RuvB-RuvC complex processes Holliday junction (HJ) DNA during genetic recombination and DNA repair, while the RuvA-RuvB complex plays an important role in the rescue of blocked DNA replication forks via replication fork reversal (RFR). RuvA specifically binds to HJ cruciform DNA, conferring on it an open structure. The RuvB hexamer acts as an ATP-dependent pump, pulling dsDNA into and through the RuvAB complex. RuvB forms 2 homohexamers on either side of HJ DNA bound by 1 or 2 RuvA tetramers; 4 subunits per hexamer contact DNA at a time. Coordinated motions by a converter formed by DNA-disengaged RuvB subunits stimulates ATP hydrolysis and nucleotide exchange. Immobilization of the converter enables RuvB to convert the ATP-contained energy into a lever motion, pulling 2 nucleotides of DNA out of the RuvA tetramer per ATP hydrolyzed, thus driving DNA branch migration. The RuvB motors rotate together with the DNA substrate, which together with the progressing nucleotide cycle form the mechanistic basis for DNA recombination by continuous HJ branch migration. Branch migration allows RuvC to scan DNA until it finds its consensus sequence, where it cleaves and resolves cruciform DNA. In Pasteurella multocida (strain Pm70), this protein is Holliday junction branch migration complex subunit RuvB.